Here is a 91-residue protein sequence, read N- to C-terminus: Potassium channel toxin TdiKIK (91 aa).

The first 25 residues, 1–25 (MVATNRCCVFALLVALLLIHSLAEA), serve as a signal peptide directing secretion. The propeptide occupies 26–44 (GKGKEVLGKIKNKLVEVKE). The BetaSPN-type CS-alpha/beta domain occupies 58-91 (EYACPVIDKFCEDHCAAKNAIGKCDDFKCQCLNS). 3 disulfide bridges follow: Cys-61-Cys-81, Cys-68-Cys-86, and Cys-72-Cys-88.

Expressed by the venom gland.

The protein localises to the secreted. The full peptide presents antibacterial and cytotoxic activities. The synthetic C-terminus (AA 33-76) inhibits voltage-gated potassium channels Kv1.1/KCNA1, Kv1.2/KCNA2, and Kv1.3/KCNA3. The protein is Potassium channel toxin TdiKIK of Tityus discrepans (Venezuelan scorpion).